Consider the following 200-residue polypeptide: ATP synthase subunit s, mitochondrial (200 aa).

Residues 1-25 constitute a mitochondrion transit peptide; it reads MMMFGKISRQLFSLKKIPWSCDSRY. The N-terminal domain stretch occupies residues 1-61; sequence MMMFGKISRQ…SEWLLRCGAK (61 aa). Gly59 is a binding site for Mg(2+). LRR repeat units follow at residues 62–87, 88–116, 117–141, and 142–173; these read VRYCGHQKWLQDYNKLPGGSVDRYKI, QAIDATDSCIMDIGFDHLVGLEHVERITL, CRCHYIEDNCLQRLSQLENLRKSLL, and ELEIIACGNVTDNGVIALRHFKNLKYLFLSDL. Thr93 contributes to the Mg(2+) binding site.

The protein belongs to the ATP synthase subunit s family. In terms of assembly, homotetramer. Associates with ATP synthase.

The protein resides in the mitochondrion. It localises to the mitochondrion inner membrane. Involved in regulation of mitochondrial membrane ATP synthase. Necessary for H(+) conduction of ATP synthase. Facilitates energy-driven catalysis of ATP synthesis by blocking a proton leak through an alternative proton exit pathway. The chain is ATP synthase subunit s, mitochondrial from Rattus norvegicus (Rat).